An 81-amino-acid chain; its full sequence is uncharacterized protein (81 aa).

A SpoVT-AbrB domain is found at 1-45; it reads MRTTIDVAGRLVIPKRIRERLGLRGNDQVEITERDGRIEIEPAPT.

To B.subtilis SpoVT.

This is an uncharacterized protein from Mycobacterium bovis (strain ATCC BAA-935 / AF2122/97).